Reading from the N-terminus, the 199-residue chain is Outer dense fiber protein 4 (199 aa).

Basic and acidic residues predominate over residues 1–14 (MNIRSLERAGRAGK). The disordered stretch occupies residues 1–25 (MNIRSLERAGRAGKQDGVAVSPGQE). A Phosphoserine modification is found at S53. 3 helical membrane-spanning segments follow: residues 68 to 88 (IAQVLASELSLLAFILLVVMV), 109 to 128 (VTTKIYTSVHIMSLGLLHIY), and 159 to 179 (LALGLGIILTIWLHLPYIPGL).

Its subcellular location is the membrane. In terms of biological role, component of the outer dense fibers (ODF) of spermatozoa which could be involved in sperm tail structure, sperm movement and general organization of cellular cytoskeleton. In Bos taurus (Bovine), this protein is Outer dense fiber protein 4 (ODF4).